Here is a 313-residue protein sequence, read N- to C-terminus: Autophagy-related protein 3 (313 aa).

The interval 103 to 125 (EDNDGWLATHGKPKDKGKEEDNL) is disordered. Residues 114–123 (KPKDKGKEED) are compositionally biased toward basic and acidic residues. C258 acts as the Glycyl thioester intermediate in catalysis.

Belongs to the ATG3 family. In terms of assembly, interacts with ATG8 through an intermediate thioester bond between Cys-258 and the C-terminal Gly of ATG8. Also interacts with the C-terminal region of the E1-like ATG7 enzyme.

Its subcellular location is the cytoplasm. In terms of biological role, E2 conjugating enzyme responsible for the E2-like covalent binding of phosphatidylethanolamine to the C-terminal Gly of ATG8. This step is required for the membrane association of ATG8. The formation of the ATG8-phosphatidylethanolamine conjugate is essential for autophagy and for the cytoplasm to vacuole transport (Cvt). This is Autophagy-related protein 3 (ATG3) from Arabidopsis thaliana (Mouse-ear cress).